We begin with the raw amino-acid sequence, 338 residues long: Phenylalanine--tRNA ligase alpha subunit (338 aa).

Position 252 (Glu-252) interacts with Mg(2+).

It belongs to the class-II aminoacyl-tRNA synthetase family. Phe-tRNA synthetase alpha subunit type 1 subfamily. As to quaternary structure, tetramer of two alpha and two beta subunits. Requires Mg(2+) as cofactor.

It is found in the cytoplasm. It carries out the reaction tRNA(Phe) + L-phenylalanine + ATP = L-phenylalanyl-tRNA(Phe) + AMP + diphosphate + H(+). This is Phenylalanine--tRNA ligase alpha subunit from Pseudomonas syringae pv. syringae (strain B728a).